An 868-amino-acid chain; its full sequence is Paladin (868 aa).

The N-myristoyl glycine moiety is linked to residue Gly-2.

This sequence belongs to the paladin family.

Its subcellular location is the cytoplasm. It localises to the cytosol. The polypeptide is Paladin (PALD1) (Gallus gallus (Chicken)).